The chain runs to 173 residues: MNIIKKGFLMNEEIREKEVRVIAEDGEQLGVIPTSEALKRAEEKELDLVMIAPTGKPPVCKIMNYGKFIYEQTKKDKEAKKKQKVINVKEIRLSATIEEHDIGIKANNARKFLKAEDKVKVTVRFRGREMEHSNVVGNKILKTFLSKVEDVCVVEKPARLEGKNMTMVLAPRK.

This sequence belongs to the IF-3 family. Monomer.

The protein localises to the cytoplasm. Its function is as follows. IF-3 binds to the 30S ribosomal subunit and shifts the equilibrium between 70S ribosomes and their 50S and 30S subunits in favor of the free subunits, thus enhancing the availability of 30S subunits on which protein synthesis initiation begins. This chain is Translation initiation factor IF-3, found in Clostridium tetani (strain Massachusetts / E88).